The following is a 1353-amino-acid chain: MSSLSAPPGGCGGDVAAAPATATSTATATATATATATATGSMEPAMVPRTANLLACKQWWRVCFLYGDQQKYYRQLYSKAAAQRLAGANQENDNAARGAGAGEGEGQEYDTVAMGDGDFIAAQLDAGEDVDDGIDLGDSSQPGGGATPTATATAGRPLFPLSSSPRRSKKLLRSLRAHVKGESRPEKPAKAAKPQSEPSSELTKRNARVTVLDDPFLFGIDADHLGDLVRGKQYSPLEATENIAKFYELQLETTEATAQVLEIIEQEEEPPEPPKPALPPKQKQPRPVPPLPARITQPAVLQPLTAGDLQFLNLSLRHRSLPRSMKPFKDPHDISFTFNELDTSTSATAAAAAAAVAAADVATGVGVGSSQQESNEPISRTPLTQISYLQKIPTLPRHFSPSGCPQGLPPPPALAGCGSALGLPSSSSASALYAAQNGGMLPTSPLPLQRHQQYLPPHHQQLPPLGAGPGQGQGHGLALGPGGAGLPQYSPAVSGCSSTAKYSNAQLPPHHHQLSPALSTPSPPSLLHHPAAGTSASAHAPFLAGPHMDMQRQSHSDDDSGCALEEYTWVPPGLRPDQVRLYFSQIPDDKVPYVNSPGEQYRVRQLLHQLPPHDNEVRYCHSLTDEERKELRLFSTQRKRDALGRGNVRQLMSARPCDGCDELISTGDIAVFATRLGPNASWHPACFTCCICRELLVDLIYFHRDGRMYCGRHHAETLKPRCSACDEIILADECTEAEGRAWHMNHFACHECDKQLGGQRYIMREGKPYCLHCFDAMFAEYCDYCGEAIGVDQGQMSHDGQHWHATDECFSCNTCRCSLLGRAFLPRRGAIYCSIACSKGEPPTPSDSSGTGMYTTPTPPTQRVRPQTRITSSHASSSPPMSPQQQQQHQASFNQAMYQLQTQQLEAAGGPVSQSQSYATSDSDAGVVKDLEHCRSGDHAGGGDFTDFSGGRASSTSHNMSPLNSPGDFQPHLMPKPMELQRDGVYNFNEMSSNLDTAWPAKPPLGATHSYQLQRQLMENQHTSSMPELAGKGPMLQHQMAAHFGQQPALHSSAQQFQHEYADIMHPPPPPPERGAVGEVPELPTPNLSVASTALPPELMGSPTHSAGDRSLNTPLSAHSATHGPTHPVSILSGASSSSPMSGEPAKKKGVRFEGIPDTLPRSRSYSGNGAGTSGGGDKDRDRDRERDRDRDRDKGGDKDRESGRHGPGHSSRRRRRRKSTSSTSSGNHHRSGSGHRSHSTTRADTYAPAQPLSSSYQGPPSVLQADSETAHKSPRQQREREREESAEESDVCSTCSSSSSSSEDYMMMYQLPQRRHYGGVRVSYVPNDALAYDRKRKPAEMAGDKDKNCIIS.

Disordered regions lie at residues 130–206 (VDDG…TKRN), 266–292 (QEEE…PPLP), and 500–540 (AKYS…SAHA). The segment covering 147-165 (TPTATATAGRPLFPLSSSP) has biased composition (low complexity). The span at 166 to 178 (RRSKKLLRSLRAH) shows a compositional bias: basic residues. Residues 179-189 (VKGESRPEKPA) show a composition bias toward basic and acidic residues. A compositionally biased stretch (low complexity) spans 514–532 (LSPALSTPSPPSLLHHPAA). The PET domain occupies 548–656 (MDMQRQSHSD…NVRQLMSARP (109 aa)). LIM zinc-binding domains are found at residues 655-719 (RPCD…ETLK), 720-780 (PRCS…MFAE), and 781-843 (YCDY…GEPP). Disordered regions lie at residues 840 to 892 (GEPP…HQAS), 933 to 962 (HCRS…NMSP), and 1062 to 1303 (ADIM…SSSS). The span at 861–892 (TQRVRPQTRITSSHASSSPPMSPQQQQQHQAS) shows a compositional bias: low complexity. Polar residues-rich tracts occupy residues 952–962 (RASSTSHNMSP) and 1111–1120 (SLNTPLSAHS). A compositionally biased stretch (low complexity) spans 1130–1142 (SILSGASSSSPMS). Basic and acidic residues predominate over residues 1177–1205 (GDKDRDRDRERDRDRDRDKGGDKDRESGR). Composition is skewed to basic residues over residues 1207–1220 (GPGH…RRKS) and 1228–1240 (NHHR…RSHS). Positions 1269 to 1284 (ETAHKSPRQQRERERE) are enriched in basic and acidic residues.

It belongs to the prickle / espinas / testin family. As to quaternary structure, interacts with dsh; PET and LIM domains interact with dsh DEP domain, in wing cells. Interacts with Vang in photoreceptor cells.

The protein resides in the cell membrane. Functionally, acts in a planar cell polarity (PCP) complex; polarization along the apical/basal axis of epithelial cells. PCP signaling in the wing disk requires the receptor fz and the cytoplasmic proteins dsh and pk. These act in a feedback loop leading to activation of the jnk cascade and subsequent polarized arrangement of hairs and bristles. Dgo and pk compete with one another for dsh binding, thereby modulating fz dsh activity and ensuring tight control over fz PCP signaling. Vang, stan and pk function together to regulate the establishment of tissue polarity in the adult eye. In Drosophila pseudoobscura pseudoobscura (Fruit fly), this protein is Protein prickle.